We begin with the raw amino-acid sequence, 327 residues long: Ornithine carbamoyltransferase (327 aa).

Carbamoyl phosphate is bound by residues 56-59, Q83, R107, and 134-137; these read STRT and HPTQ. L-ornithine contacts are provided by residues N166, D230, and 234-235; that span reads SM. Carbamoyl phosphate is bound by residues 269-270 and R314; that span reads CL.

This sequence belongs to the aspartate/ornithine carbamoyltransferase superfamily. OTCase family.

The protein resides in the cytoplasm. The enzyme catalyses carbamoyl phosphate + L-ornithine = L-citrulline + phosphate + H(+). Its pathway is amino-acid degradation; L-arginine degradation via ADI pathway; carbamoyl phosphate from L-arginine: step 2/2. In terms of biological role, reversibly catalyzes the transfer of the carbamoyl group from carbamoyl phosphate (CP) to the N(epsilon) atom of ornithine (ORN) to produce L-citrulline. This is Ornithine carbamoyltransferase from Borreliella burgdorferi (strain ZS7) (Borrelia burgdorferi).